Here is a 260-residue protein sequence, read N- to C-terminus: Ribosomal RNA small subunit methyltransferase J (260 aa).

Residues 101–102 (RD), 117–118 (ER), 153–154 (SS), and Asp176 contribute to the S-adenosyl-L-methionine site.

This sequence belongs to the methyltransferase superfamily. RsmJ family.

Its subcellular location is the cytoplasm. It carries out the reaction guanosine(1516) in 16S rRNA + S-adenosyl-L-methionine = N(2)-methylguanosine(1516) in 16S rRNA + S-adenosyl-L-homocysteine + H(+). Functionally, specifically methylates the guanosine in position 1516 of 16S rRNA. This is Ribosomal RNA small subunit methyltransferase J from Aliivibrio salmonicida (strain LFI1238) (Vibrio salmonicida (strain LFI1238)).